The following is a 552-amino-acid chain: BAR/IMD domain-containing adapter protein 2 (552 aa).

The region spanning 1 to 250 (MSLSRSEEMH…VQLMQQVASN (250 aa)) is the IMD domain. Residues 132–153 (DALDKCQAELKKLRKKSQGSKN) are a coiled coil. S261 carries the post-translational modification Phosphoserine. Positions 295–369 (STPIMNGVTG…TLPRSSSMAA (75 aa)) are disordered. A Phosphothreonine modification is found at T296. Residues 320-334 (QPKSLSPPQSQSKLS) show a composition bias toward low complexity. Residues S323, S325, and S336 each carry the phosphoserine modification. Residue T340 is modified to Phosphothreonine. Position 346 is a phosphoserine (S346). The segment covering 348–367 (TPKNSYATTENKTLPRSSSM) has biased composition (polar residues). At T360 the chain carries Phosphothreonine. S366, S384, S395, and S454 each carry phosphoserine. Residues 374-437 (NGRMRVKAIF…PFSYTRVLDS (64 aa)) enclose the SH3 domain. Polar residues predominate over residues 447–457 (LQQGKSSSTGN). Disordered stretches follow at residues 447–466 (LQQGKSSSTGNLLDKDDLAI) and 525–552 (TNDRCDLSAQGPEGREHGDGSARTLAGR).

In terms of assembly, homodimer. Interacts with CDC42 and RAC1 that have been activated by GTP binding. Interacts with ATN1, ADGRB1, EPS8, SHANK1, SHANK2, SHANK3, WASF1 and WASF2. Interacts with ENAH after recruitment of CDC42. Interacts with TIAM1 and DIAPH1. Interacts (via SH3 domain) with E.coli effector protein EspF(U) (via PXXP motifs). Interacts with E.coli intimin receptor Tir. Post-translationally, phosphorylated on tyrosine residues by INSR in response to insulin treatment. As to expression, isoform 1 and isoform 4 are expressed almost exclusively in brain. Isoform 4 is barely detectable in placenta, prostate and testis. A short isoform is ubiquitous, with the highest expression in liver, prostate, testis and placenta.

Its subcellular location is the cytoplasm. It localises to the membrane. It is found in the cell projection. The protein resides in the filopodium. The protein localises to the ruffle. Its subcellular location is the cytoskeleton. Functionally, adapter protein that links membrane-bound small G-proteins to cytoplasmic effector proteins. Necessary for CDC42-mediated reorganization of the actin cytoskeleton and for RAC1-mediated membrane ruffling. Involved in the regulation of the actin cytoskeleton by WASF family members and the Arp2/3 complex. Plays a role in neurite growth. Acts syngeristically with ENAH to promote filipodia formation. Plays a role in the reorganization of the actin cytoskeleton in response to bacterial infection. Participates in actin bundling when associated with EPS8, promoting filopodial protrusions. The chain is BAR/IMD domain-containing adapter protein 2 (BAIAP2) from Homo sapiens (Human).